Consider the following 363-residue polypeptide: MISNSDCDENLIKQQQQEIQDKNFLIDVAIGYTKSNALSCALKYKIPQLLEDKSKSCKELSEILKVNCDNLYRLLRTLSTIGIFIEDEVEDGVFRNSRLSNLLRNSNSDSWVNNVYLQSHPNVIQSFMYLDKTIECGTSQGMTSQGFSSAWELFEKDKSLNAHFHNTMTSFTSDEIKTILEYIDFNQYKSIVDLGGSSGELLKSIAKSSRGQLVESFINFDLPLVINQNKVNNENGAAEFDKRYSEVASDLFVDSDYPSADCYTLKFIFHMFNDDKVLTILDKISKSIKPNGKVYVFDHIVQPKNQPYAPFYFDLQMIVNFNGKERSQNEWKTIFEKSPFKIDTILILPDSKRMSVIELSLKQ.

5 residues coordinate S-adenosyl-L-methionine: Gly-195, Asp-221, Asp-250, Leu-251, and Lys-266. Residue His-270 is the Proton acceptor of the active site.

Belongs to the class I-like SAM-binding methyltransferase superfamily. Cation-independent O-methyltransferase family. COMT subfamily.

It carries out the reaction (3,5-dichloro-2,4,6-trihydroxyphenyl)hexan-1-one + S-adenosyl-L-methionine = 1-(3,5-dichloro-2,6-dihydroxy-4-methoxyphenyl)hexan-1-one + S-adenosyl-L-homocysteine + H(+). O-methyltransferase; part of the gene cluster that mediates the biosynthesis of DIF-1 (Differentiation Inducing Factor-1), a signal molecule involved in the differentiation of pstO (prestalk-O) cells. The three-step process begins with the formation of (2,4,6-trihydroxyphenyl)-1-hexan-1-one (THPH) by the polyketide synthase StlB. THPH is then dichlorinated by the flavin-dependent halogenase ChlA. The last step of DIF-1 biosynthesis is the O-methylation of dichloro-THPH (or des-methyl-DIF-1) by the methyltransferase DmtA to yield DIF-1. This chain is Des-methyl DIF-1 methyltransferase A, found in Dictyostelium discoideum (Social amoeba).